The following is a 353-amino-acid chain: S-adenosylmethionine decarboxylase proenzyme (353 aa).

Catalysis depends on residues E9 and E12. S69 serves as the catalytic Schiff-base intermediate with substrate; via pyruvic acid. S69 bears the Pyruvic acid (Ser); by autocatalysis mark. Catalysis depends on C83, which acts as the Proton donor; for catalytic activity. Catalysis depends on proton acceptor; for processing activity residues S232 and H245.

The protein belongs to the eukaryotic AdoMetDC family. Requires pyruvate as cofactor. Is synthesized initially as an inactive proenzyme. Formation of the active enzyme involves a self-maturation process in which the active site pyruvoyl group is generated from an internal serine residue via an autocatalytic post-translational modification. Two non-identical subunits are generated from the proenzyme in this reaction, and the pyruvate is formed at the N-terminus of the alpha chain, which is derived from the carboxyl end of the proenzyme. The post-translation cleavage follows an unusual pathway, termed non-hydrolytic serinolysis, in which the side chain hydroxyl group of the serine supplies its oxygen atom to form the C-terminus of the beta chain, while the remainder of the serine residue undergoes an oxidative deamination to produce ammonia and the pyruvoyl group blocking the N-terminus of the alpha chain.

It carries out the reaction S-adenosyl-L-methionine + H(+) = S-adenosyl 3-(methylsulfanyl)propylamine + CO2. The protein operates within amine and polyamine biosynthesis; S-adenosylmethioninamine biosynthesis; S-adenosylmethioninamine from S-adenosyl-L-methionine: step 1/1. This is S-adenosylmethionine decarboxylase proenzyme (SAMDC) from Pisum sativum (Garden pea).